We begin with the raw amino-acid sequence, 1128 residues long: Inactive phospholipase C-like protein 2 (1128 aa).

The interval 1-129 (MAECGRGAAG…KKTVSFSSMP (129 aa)) is disordered. The residue at position 2 (alanine 2) is an N-acetylalanine. Phosphoserine is present on serine 16. The span at 20–30 (ALGAKGALKAG) shows a compositional bias: low complexity. The span at 31–43 (AGEGGGGGGGGRL) shows a compositional bias: gly residues. Threonine 85 is modified (phosphothreonine). Positions 142–252 (NSMVEGSELK…WVTGLRYLIS (111 aa)) constitute a PH domain. Residues 427–571 (QDMKQPLSHY…LKGKILIKAK (145 aa)) form the PI-PLC X-box domain. A Phosphothreonine modification is found at threonine 585. One can recognise a PI-PLC Y-box domain in the interval 619 to 735 (LSELVSICKS…GYVLRPAIMR (117 aa)). One can recognise a C2 domain in the interval 735-864 (REEVSFFSAN…TGYRHVPLQS (130 aa)). The disordered stretch occupies residues 1100–1128 (KPGTENSEAQKPRRSLEAIPEKASDENGD). Basic and acidic residues predominate over residues 1107–1128 (EAQKPRRSLEAIPEKASDENGD). Serine 1114 is subject to Phosphoserine.

Ubiquitously expressed, with a strong expression in skeletal muscle.

The protein localises to the cytoplasm. Functionally, may play an role in the regulation of Ins(1,4,5)P3 around the endoplasmic reticulum. In Mus musculus (Mouse), this protein is Inactive phospholipase C-like protein 2 (Plcl2).